The sequence spans 295 residues: Indole-3-glycerol phosphate synthase (295 aa).

This sequence belongs to the TrpC family.

The enzyme catalyses 1-(2-carboxyphenylamino)-1-deoxy-D-ribulose 5-phosphate + H(+) = (1S,2R)-1-C-(indol-3-yl)glycerol 3-phosphate + CO2 + H2O. Its pathway is amino-acid biosynthesis; L-tryptophan biosynthesis; L-tryptophan from chorismate: step 4/5. This chain is Indole-3-glycerol phosphate synthase, found in Prochlorococcus marinus (strain MIT 9215).